Consider the following 150-residue polypeptide: Cell division protein SepF (150 aa).

The tract at residues Asp-26 to Lys-45 is disordered.

It belongs to the SepF family. As to quaternary structure, homodimer. Interacts with FtsZ.

The protein localises to the cytoplasm. Its function is as follows. Cell division protein that is part of the divisome complex and is recruited early to the Z-ring. Probably stimulates Z-ring formation, perhaps through the cross-linking of FtsZ protofilaments. Its function overlaps with FtsA. In Bacillus licheniformis (strain ATCC 14580 / DSM 13 / JCM 2505 / CCUG 7422 / NBRC 12200 / NCIMB 9375 / NCTC 10341 / NRRL NRS-1264 / Gibson 46), this protein is Cell division protein SepF.